Consider the following 358-residue polypeptide: NADH-quinone oxidoreductase subunit H (358 aa).

8 consecutive transmembrane segments (helical) span residues 30-50 (VVIGVCIVALYAILAILLIYM), 96-116 (FLYNLAPFMVIIASFLTFSCL), 129-149 (VGVFFLLAASSIGVVGILLAG), 168-188 (IISYELSVGLSILTMVVLMGT), 201-221 (GWFIFKGHIPALIAFVIYLIA), 265-285 (FIVAAVAATIFLGGWMPLHIV), 297-317 (IPGFIWFFGKAFFVVFLLMWI), and 336-356 (YLVPISMVNLVIMVLIVVFGL).

It belongs to the complex I subunit 1 family. NDH-1 is composed of 14 different subunits. Subunits NuoA, H, J, K, L, M, N constitute the membrane sector of the complex.

Its subcellular location is the cell inner membrane. It carries out the reaction a quinone + NADH + 5 H(+)(in) = a quinol + NAD(+) + 4 H(+)(out). NDH-1 shuttles electrons from NADH, via FMN and iron-sulfur (Fe-S) centers, to quinones in the respiratory chain. The immediate electron acceptor for the enzyme in this species is believed to be ubiquinone. Couples the redox reaction to proton translocation (for every two electrons transferred, four hydrogen ions are translocated across the cytoplasmic membrane), and thus conserves the redox energy in a proton gradient. This subunit may bind ubiquinone. The sequence is that of NADH-quinone oxidoreductase subunit H from Bacteroides fragilis (strain ATCC 25285 / DSM 2151 / CCUG 4856 / JCM 11019 / LMG 10263 / NCTC 9343 / Onslow / VPI 2553 / EN-2).